A 413-amino-acid chain; its full sequence is Serine/threonine transporter SstT (413 aa).

9 helical membrane-spanning segments follow: residues 11 to 31, 43 to 63, 82 to 102, 141 to 161, 192 to 212, 216 to 236, 298 to 318, 339 to 359, and 363 to 383; these read IANGSLVLQIISGIILGVILA, FLGSLFVGALKAIAPILVFVL, IIGLYLLGTFVAALTAVLFSF, ALLTGNYIGILVWGAGLGITM, IGIFGLVAATFAETGFDALAG, LLMVLVGSMLFIALVINPIIV, MGGAAITITVLTLAAAHTLGI, ASGVAGGSLLLIPLACSLFGI, and VAMQVVAVGFIIGVIQDSAET.

The protein belongs to the dicarboxylate/amino acid:cation symporter (DAACS) (TC 2.A.23) family.

It is found in the cell inner membrane. It catalyses the reaction L-serine(in) + Na(+)(in) = L-serine(out) + Na(+)(out). The enzyme catalyses L-threonine(in) + Na(+)(in) = L-threonine(out) + Na(+)(out). Functionally, involved in the import of serine and threonine into the cell, with the concomitant import of sodium (symport system). This Shewanella frigidimarina (strain NCIMB 400) protein is Serine/threonine transporter SstT.